We begin with the raw amino-acid sequence, 473 residues long: MKTLYSLRRFYHVETLFNGTLALAGRDQETTGFAWWAGNARLINLSGKLLGAHVAHAGLIVFWAGAMNLFEVAHFVPEKPMYEQGLILLPHLATLGWGVGPGGEVIDTFPYFVSGVLHLISSAVLGFGGIYHALLGPETLEESFPFFGYVWKDRNKMTTILGIHLILLGIGAFLLVFKALYFGGVYDTWAPGGGDVRKITNLTLSPSIIFGYLLKSPFGGEGWIVSVDDLEDIIGGHVWLGSICILGGIWHILTKPFAWARRALVWSGEAYLSYSLGALAVFGFIACCFVWFNNTAYPSEFYGPTGPEASQAQAFTFLVRDQRLGANVGSAQGPTGLGKYLMRSPTGEVIFGGETMRFWDLRAPWLEPLRGPNGLDLSRLKKDIQPWQERRSAEYMTHAPLGSLNSVGGVATEINAVNYVSPRSWLATSHFVLGFFFFVGHLWHAGRARAAAAGFEKGIDRDFEPVLFMTPLN.

Residues 1–14 (MKTLYSLRRFYHVE) constitute a propeptide that is removed on maturation. At T15 the chain carries N-acetylthreonine. Residue T15 is modified to Phosphothreonine. Helical transmembrane passes span 69-93 (LFEV…PHLA), 134-155 (LLGP…KDRN), 178-200 (KALY…RKIT), 255-275 (KPFA…LSYS), and 291-312 (WFNN…ASQA). Residue E367 participates in [CaMn4O5] cluster binding. Residues 447 to 471 (RARAAAAGFEKGIDRDFEPVLFMTP) form a helical membrane-spanning segment.

It belongs to the PsbB/PsbC family. PsbC subfamily. In terms of assembly, PSII is composed of 1 copy each of membrane proteins PsbA, PsbB, PsbC, PsbD, PsbE, PsbF, PsbH, PsbI, PsbJ, PsbK, PsbL, PsbM, PsbT, PsbX, PsbY, PsbZ, Psb30/Ycf12, at least 3 peripheral proteins of the oxygen-evolving complex and a large number of cofactors. It forms dimeric complexes. The cofactor is Binds multiple chlorophylls and provides some of the ligands for the Ca-4Mn-5O cluster of the oxygen-evolving complex. It may also provide a ligand for a Cl- that is required for oxygen evolution. PSII binds additional chlorophylls, carotenoids and specific lipids..

Its subcellular location is the plastid. The protein localises to the chloroplast thylakoid membrane. Its function is as follows. One of the components of the core complex of photosystem II (PSII). It binds chlorophyll and helps catalyze the primary light-induced photochemical processes of PSII. PSII is a light-driven water:plastoquinone oxidoreductase, using light energy to abstract electrons from H(2)O, generating O(2) and a proton gradient subsequently used for ATP formation. The chain is Photosystem II CP43 reaction center protein from Solanum tuberosum (Potato).